The following is a 236-amino-acid chain: Ascorbate-specific transmembrane electron transporter 2 (236 aa).

At 1 to 13 (MGLGLGVRAAPFT) the chain is on the cytoplasmic side. A helical transmembrane segment spans residues 14 to 34 (YAAHALAVAAAAMVLVWAIYF). A Cytochrome b561 domain is found at 15-219 (AAHALAVAAA…FGASVVVAAI (205 aa)). Topologically, residues 35-50 (RGGLAIEATNKNLIFN) are extracellular. Residues 51-71 (VHPVLMLIGYIIIGGEAIMVY) form a helical membrane-spanning segment. His-52 provides a ligand contact to heme b. 67 to 75 (AIMVYRVLP) provides a ligand contact to L-ascorbate. At 72-84 (RVLPTSNHETNKL) the chain is on the cytoplasmic side. Residues 85-105 (IHLVLHGIALVLGAVGIYFAF) traverse the membrane as a helical segment. His-86 and His-120 together coordinate heme b. At 106-122 (KNHNESGIANLYSLHSW) the chain is on the extracellular side. 116 to 125 (LYSLHSWIGI) lines the monodehydro-L-ascorbate radical pocket. A helical transmembrane segment spans residues 123–143 (IGIGTITLYGIQWIVGFVTFF). Over 144–153 (FPGAAPNVKK) the chain is Cytoplasmic. The chain crosses the membrane as a helical span at residues 154–174 (GVLPWHILFGLFVYILALANA). His-159 lines the heme b pocket. Topologically, residues 175 to 201 (ELGFLEKLTFLESSGLDKYGTEAFLVN) are extracellular. The helical transmembrane segment at 202-222 (FTALVVVLFGASVVVAAIAPV) threads the bilayer. The Cytoplasmic portion of the chain corresponds to 223 to 236 (RLEEPQGYVPIPEN).

Heme b serves as cofactor.

Its subcellular location is the membrane. Two-heme-containing cytochrome. Catalyzes ascorbate-dependent trans-membrane electron transfer by utilizing a concerted H(+)/e(-) transfer mechanism. The protein is Ascorbate-specific transmembrane electron transporter 2 of Zea mays (Maize).